The sequence spans 35 residues: Cycloamanide F proprotein (35 aa).

A propeptide spanning residues 1–10 (MSDINATRLP) is cleaved from the precursor. A cross-link (cyclopeptide (Ile-Pro)) is located at residues 11–18 (IVGILGLP). The propeptide occupies 19-35 (CIGDDVNSTLTHGEDLC).

The protein belongs to the MSDIN fungal toxin family. Processed by the macrocyclase-peptidase enzyme POPB to yield a cyclic decapeptide. POPB first removes 10 residues from the N-terminus. Conformational trapping of the remaining peptide forces the enzyme to release this intermediate rather than proceed to macrocyclization. The enzyme rebinds the remaining peptide in a different conformation and catalyzes macrocyclization of the N-terminal 8 residues.

Cyclic octapeptide that belongs to the MSDIN-like toxin family responsible for a large number of food poisoning cases and deaths. Cycloaminide E is structurally related to other cycloamanides that are non-toxic to mammals but show immunosuppressive activity. This is Cycloamanide F proprotein from Amanita phalloides (Death cap).